The chain runs to 360 residues: Phospho-N-acetylmuramoyl-pentapeptide-transferase (360 aa).

10 consecutive transmembrane segments (helical) span residues V27–F47, T71–A91, V98–L118, L142–M162, Y168–S188, G199–T219, A236–F256, V263–L283, I288–V308, and V338–K358.

This sequence belongs to the glycosyltransferase 4 family. MraY subfamily. Requires Mg(2+) as cofactor.

It localises to the cell inner membrane. The enzyme catalyses UDP-N-acetyl-alpha-D-muramoyl-L-alanyl-gamma-D-glutamyl-meso-2,6-diaminopimeloyl-D-alanyl-D-alanine + di-trans,octa-cis-undecaprenyl phosphate = di-trans,octa-cis-undecaprenyl diphospho-N-acetyl-alpha-D-muramoyl-L-alanyl-D-glutamyl-meso-2,6-diaminopimeloyl-D-alanyl-D-alanine + UMP. It participates in cell wall biogenesis; peptidoglycan biosynthesis. Functionally, catalyzes the initial step of the lipid cycle reactions in the biosynthesis of the cell wall peptidoglycan: transfers peptidoglycan precursor phospho-MurNAc-pentapeptide from UDP-MurNAc-pentapeptide onto the lipid carrier undecaprenyl phosphate, yielding undecaprenyl-pyrophosphoryl-MurNAc-pentapeptide, known as lipid I. The protein is Phospho-N-acetylmuramoyl-pentapeptide-transferase of Psychromonas ingrahamii (strain DSM 17664 / CCUG 51855 / 37).